The chain runs to 262 residues: Flap endonuclease Xni (262 aa).

D105 serves as a coordination point for Mg(2+). The 5'-3' exonuclease domain maps to 164–251 (SQFLDLMALA…NINLKDFRAN (88 aa)). Positions 172, 173, 181, 183, and 186 each coordinate K(+). The segment at 185–190 (GIGPKS) is interaction with DNA.

Belongs to the Xni family. Requires Mg(2+) as cofactor. It depends on K(+) as a cofactor.

Functionally, has flap endonuclease activity. During DNA replication, flap endonucleases cleave the 5'-overhanging flap structure that is generated by displacement synthesis when DNA polymerase encounters the 5'-end of a downstream Okazaki fragment. The sequence is that of Flap endonuclease Xni from Shewanella sp. (strain W3-18-1).